Here is a 140-residue protein sequence, read N- to C-terminus: Endoribonuclease YbeY (140 aa).

Residues histidine 100, histidine 104, and histidine 110 each coordinate Zn(2+).

Belongs to the endoribonuclease YbeY family. Requires Zn(2+) as cofactor.

It is found in the cytoplasm. Functionally, single strand-specific metallo-endoribonuclease involved in late-stage 70S ribosome quality control and in maturation of the 3' terminus of the 16S rRNA. The sequence is that of Endoribonuclease YbeY from Helicobacter pylori (strain P12).